We begin with the raw amino-acid sequence, 435 residues long: C4-dicarboxylate transport protein (435 aa).

Helical transmembrane passes span 4-24, 44-64, 76-96, 142-162, 184-204, 222-242, 289-309, 326-346, and 352-372; these read SLFK…ILLG, LIKM…IAGM, VALL…LIIV, IGAF…LFGF, VIFG…FGAM, LIIC…GTIA, VVGL…SIYL, IFHQ…VAGV, and IVLA…LALI.

This sequence belongs to the dicarboxylate/amino acid:cation symporter (DAACS) (TC 2.A.23) family.

The protein localises to the cell inner membrane. In terms of biological role, responsible for the transport of dicarboxylates such as succinate, fumarate, and malate from the periplasm across the membrane. The protein is C4-dicarboxylate transport protein of Salmonella paratyphi A (strain ATCC 9150 / SARB42).